Consider the following 118-residue polypeptide: Ribonuclease P protein component (118 aa).

The protein belongs to the RnpA family. In terms of assembly, consists of a catalytic RNA component (M1 or rnpB) and a protein subunit.

The enzyme catalyses Endonucleolytic cleavage of RNA, removing 5'-extranucleotides from tRNA precursor.. Its function is as follows. RNaseP catalyzes the removal of the 5'-leader sequence from pre-tRNA to produce the mature 5'-terminus. It can also cleave other RNA substrates such as 4.5S RNA. The protein component plays an auxiliary but essential role in vivo by binding to the 5'-leader sequence and broadening the substrate specificity of the ribozyme. This is Ribonuclease P protein component from Shewanella frigidimarina (strain NCIMB 400).